Consider the following 190-residue polypeptide: Ribosome hibernation promotion factor (190 aa).

Residues 101–190 (RDRGDQEVFV…KYGLIQTSEQ (90 aa)) form a required for ribosome-binding region.

This sequence belongs to the HPF/YfiA ribosome-associated protein family. Long HPF subfamily. In terms of assembly, interacts with 100S ribosomes during exponential growth, as 100S ribosomes decrease (after 28 hours) also found associated with 30s and 50S subunits.

Its subcellular location is the cytoplasm. Functionally, required and sufficient for dimerization of active 70S ribosomes into 100S ribosomes. 110S ribosomes are probably translationally inactive and may serve as a reservoir of easily reactivated ribosomes when necessary in the cell. Also reduces the translation efficiency of a small number of genes. Unlike E.coli, 100S ribosomes are present during exponential growth and decrease during stationary phase. This strain produces 30% fewer 100S ribosomes than strain N315 and RN4200 under the same growth conditions. This is Ribosome hibernation promotion factor from Staphylococcus aureus (strain USA300).